The primary structure comprises 175 residues: MLAALLVCAMVALTRAANGDTGKEAVMTGSSGKNLTECPTDWKMFNGRCFLFNPLQLHWAHAQISCMKDGANLASIHSLEEYAFVKELTTAGLIPAWIGGSDCHVSTYWFWMDSTSMDFTDWCAAQPDFTLTECCIQINVGVGKCWNDTPCTHLHASVCAKPATVIPEVTPPSIM.

Residues 1–16 (MLAALLVCAMVALTRA) form the signal peptide. The propeptide occupies 17 to 33 (ANGDTGKEAVMTGSSGK). The C-type lectin domain occupies 36-163 (TECPTDWKMF…LHASVCAKPA (128 aa)). Cystine bridges form between C38-C49, C66-C159, C103-C134, C123-C145, and C135-C151.

The protein localises to the secreted. In terms of biological role, antifreeze proteins lower the blood freezing point. In Osmerus mordax (Rainbow smelt), this protein is Type-2 ice-structuring protein.